The sequence spans 331 residues: Ornithine lipid hydroxylase OlsE (331 aa).

5 helical membrane passes run 13 to 33 (VSSL…YFAF), 37 to 57 (MHLL…ALFE), 85 to 105 (GGVQ…ATVA), 120 to 140 (WPMA…LYMA), and 189 to 209 (LLGA…FIGL). In terms of domain architecture, Fatty acid hydroxylase spans 126–260 (VVLGLVIAEF…LVIWDQLLGT (135 aa)).

It belongs to the sterol desaturase family.

Its subcellular location is the cell inner membrane. It participates in lipid metabolism. In terms of biological role, involved in the biosynthesis of ornithine lipids (OLs), which are phosphorus-free membrane lipids. Is responsible for the hydroxylation of OL within the ornithine moiety. This is Ornithine lipid hydroxylase OlsE from Rhizobium tropici.